We begin with the raw amino-acid sequence, 555 residues long: Potassium-transporting ATPase potassium-binding subunit (555 aa).

A run of 10 helical transmembrane segments spans residues 2-22 (IWVA…PTGI), 60-80 (QYAL…YFIF), 130-150 (IGIT…VMAF), 173-193 (VFLP…VPQT), 246-266 (MSNI…PFTY), 278-298 (ILFV…TTSE), 374-394 (AGFV…GLMV), 412-432 (LIAV…ALAL), 483-503 (LVMF…AASL), and 525-545 (GIFI…MLVL).

The protein belongs to the KdpA family. The system is composed of three essential subunits: KdpA, KdpB and KdpC.

It is found in the cell membrane. Part of the high-affinity ATP-driven potassium transport (or Kdp) system, which catalyzes the hydrolysis of ATP coupled with the electrogenic transport of potassium into the cytoplasm. This subunit binds the extracellular potassium ions and delivers the ions to the membrane domain of KdpB through an intramembrane tunnel. The sequence is that of Potassium-transporting ATPase potassium-binding subunit from Bacillus cereus (strain ZK / E33L).